The chain runs to 86 residues: Weak neurotoxin WNTX34 (86 aa).

Residues 1–21 (MKTLLLTLVVVTIVCLDLGYS) form the signal peptide. Disulfide bonds link C24–C45, C27–C32, C38–C63, C67–C78, and C79–C84.

The protein belongs to the three-finger toxin family. Ancestral subfamily. Orphan group II sub-subfamily. As to expression, expressed by the venom gland.

The protein resides in the secreted. Its function is as follows. Binds with low affinity to muscular (alpha-1-beta-1-delta-epsilon/CHRNA1-CHRNB1-CHRND-CHRNE) and very low affinity to neuronal (alpha-7/CHRNA7) nicotinic acetylcholine receptor (nAChR). This Ophiophagus hannah (King cobra) protein is Weak neurotoxin WNTX34.